The chain runs to 148 residues: Transcriptional regulator MraZ (148 aa).

SpoVT-AbrB domains are found at residues 5–53 (ETAI…AEKE) and 82–125 (SAVL…SEQA).

This sequence belongs to the MraZ family. In terms of assembly, forms oligomers.

The protein resides in the cytoplasm. It localises to the nucleoid. This is Transcriptional regulator MraZ from Xanthomonas axonopodis pv. citri (strain 306).